The following is a 173-amino-acid chain: Disulfide bond formation protein B (173 aa).

The Cytoplasmic segment spans residues 1 to 11; sequence MNALQWSFRAQ. The chain crosses the membrane as a helical span at residues 12–28; sequence CLTGFLFCTGLLAYAIF. Over 29 to 46 the chain is Periplasmic; it reads LQLHQGLEPCPLCIFQRI. A disulfide bond links cysteine 38 and cysteine 41. Residues 47-63 traverse the membrane as a helical segment; it reads AFAVLGILFLIAGLYNS. At 64-70 the chain is on the cytoplasmic side; it reads SNVYTRK. A helical membrane pass occupies residues 71-88; the sequence is AYGLLIFLTAAIGTGIAG. Topologically, residues 89-145 are periplasmic; that stretch reads RHVWVQLMPHNTISSCGSPLSFLSETMGPFEVFRTVLTGTSDCGNIDWRFLGLSMPM. A disulfide bond links cysteine 104 and cysteine 131. Residues 146–164 traverse the membrane as a helical segment; the sequence is WSMFWFVALALLGLLVGFK. Residues 165-173 are Cytoplasmic-facing; it reads AERRKPLFS.

It belongs to the DsbB family.

The protein localises to the cell inner membrane. In terms of biological role, required for disulfide bond formation in some periplasmic proteins. Acts by oxidizing the DsbA protein. The polypeptide is Disulfide bond formation protein B (Xylella fastidiosa (strain 9a5c)).